The sequence spans 79 residues: Sec-independent protein translocase protein TatA (79 aa).

A helical membrane pass occupies residues 1–21 (MGGWSSPSHWLIILLIVVLLF). Positions 49–61 (EVAKNTQKIEENK) are enriched in basic and acidic residues. A disordered region spans residues 49 to 79 (EVAKNTQKIEENKNTTNNTNADASIDETKKA).

The protein belongs to the TatA/E family. In terms of assembly, the Tat system comprises two distinct complexes: a TatABC complex, containing multiple copies of TatA, TatB and TatC subunits, and a separate TatA complex, containing only TatA subunits. Substrates initially bind to the TatABC complex, which probably triggers association of the separate TatA complex to form the active translocon.

Its subcellular location is the cell inner membrane. In terms of biological role, part of the twin-arginine translocation (Tat) system that transports large folded proteins containing a characteristic twin-arginine motif in their signal peptide across membranes. TatA could form the protein-conducting channel of the Tat system. This Campylobacter jejuni subsp. doylei (strain ATCC BAA-1458 / RM4099 / 269.97) protein is Sec-independent protein translocase protein TatA.